We begin with the raw amino-acid sequence, 475 residues long: Secreted triacylglycerol lipase LIP5 (475 aa).

The first 19 residues, 1–19 (MYPCTLLMVLLCLAIMTHG), serve as a signal peptide directing secretion. Cysteines 129 and 300 form a disulfide. S213 (nucleophile) is an active-site residue. N246 and N312 each carry an N-linked (GlcNAc...) asparagine glycan. The active site involves D360. N369 carries N-linked (GlcNAc...) asparagine glycosylation. Residue H394 is part of the active site. N471 is a glycosylation site (N-linked (GlcNAc...) asparagine).

This sequence belongs to the AB hydrolase superfamily. Lipase family. Class Lip subfamily.

The catalysed reaction is a triacylglycerol + H2O = a diacylglycerol + a fatty acid + H(+). It carries out the reaction a monoacylglycerol + H2O = glycerol + a fatty acid + H(+). It catalyses the reaction a diacylglycerol + H2O = a monoacylglycerol + a fatty acid + H(+). In terms of biological role, secreted lipase involved in Dandruff and seborrheic dermatitis (D/SD) probably via lipase-mediated breakdown of sebaceous lipids and release of irritating free fatty acids. Has triacylglycerol lipase activity and is able to hydrolyze triolein. Mostly converts monoolein to di- and triolein, while free fatty acids are only produced in low amounts. This is Secreted triacylglycerol lipase LIP5 from Malassezia globosa (strain ATCC MYA-4612 / CBS 7966) (Dandruff-associated fungus).